The chain runs to 234 residues: Glucosamine-6-phosphate deaminase (234 aa).

Asp63 acts as the Proton acceptor; for enolization step in catalysis. Asn129 acts as the For ring-opening step in catalysis. The active-site Proton acceptor; for ring-opening step is His131. Glu136 serves as the catalytic For ring-opening step.

Belongs to the glucosamine/galactosamine-6-phosphate isomerase family. NagB subfamily.

It catalyses the reaction alpha-D-glucosamine 6-phosphate + H2O = beta-D-fructose 6-phosphate + NH4(+). The protein operates within amino-sugar metabolism; N-acetylneuraminate degradation; D-fructose 6-phosphate from N-acetylneuraminate: step 5/5. Its function is as follows. Catalyzes the reversible isomerization-deamination of glucosamine 6-phosphate (GlcN6P) to form fructose 6-phosphate (Fru6P) and ammonium ion. The sequence is that of Glucosamine-6-phosphate deaminase from Listeria monocytogenes serovar 1/2a (strain ATCC BAA-679 / EGD-e).